Consider the following 205-residue polypeptide: Proteasome subunit beta (205 aa).

Residues 1 to 8 constitute a propeptide, removed in mature form; by autocatalysis; the sequence is MDDKQYKG. Thr-9 (nucleophile) is an active-site residue.

The protein belongs to the peptidase T1B family. As to quaternary structure, the 20S proteasome core is composed of 14 alpha and 14 beta subunits that assemble into four stacked heptameric rings, resulting in a barrel-shaped structure. The two inner rings, each composed of seven catalytic beta subunits, are sandwiched by two outer rings, each composed of seven alpha subunits. The catalytic chamber with the active sites is on the inside of the barrel. Has a gated structure, the ends of the cylinder being occluded by the N-termini of the alpha-subunits. Is capped at one or both ends by the proteasome regulatory ATPase, PAN.

It is found in the cytoplasm. It catalyses the reaction Cleavage of peptide bonds with very broad specificity.. With respect to regulation, the formation of the proteasomal ATPase PAN-20S proteasome complex, via the docking of the C-termini of PAN into the intersubunit pockets in the alpha-rings, triggers opening of the gate for substrate entry. Interconversion between the open-gate and close-gate conformations leads to a dynamic regulation of the 20S proteasome proteolysis activity. Functionally, component of the proteasome core, a large protease complex with broad specificity involved in protein degradation. The polypeptide is Proteasome subunit beta (Methanocella paludicola (strain DSM 17711 / JCM 13418 / NBRC 101707 / SANAE)).